We begin with the raw amino-acid sequence, 633 residues long: MSHQSDLISEDILAYLGQHERKELLRFLTCGNVDDGKSTLIGRLLHDSKMIYEDHLEAITRDSKKVGTTGDDVDLALLVDGLQAEREQGITIDVAYRYFSTAKRKFIIADTPGHEQYTRNMATGASTCDLAIILIDARYGVQTQTRRHSFIASLLGIRHIVVAINKMDLKDFDQGVFEQIKADYLAFAEKIGLKTSSLHFVPMSALKGDNVVNKSERSPWYAGQSLMEILETVEIAADRNLDDMRFPVQYVNRPNLNFRGFAGTLASGVVRKGDEVVALPSGKGSKVKSIVTFEGELEQAGPGQAVTLTLEDEIDVSRGDMLVHADNRPLVTDGFDAMLVWMAEEPMLPGKKYDIKRATSYVPGSIPSIVHKVDVNTLERTPGSELKLNEIARVKVSLDAPIALDGYEQNRTTGAFIVIDRLTNGTVGAGMIVSAPPAAHGSSAHHGSNAHVTREERAGRFGQQPATVLFSGLSGAGKSTLAYAVERKLFDMGRAVYVLDGQNLRHDLNKGLPQDRAGRTENWLRTAHVAKQFNEAGLISLCAFVAPSAEGREQARALIGAERLITVYVQASPQVCRERDPQGLYAAGEDNIPGESFPYDVPLDADLVIDTQALSVEDGVKQVLDLLRERQAI.

The tract at residues methionine 1–glutamine 463 is sulfate adenylyltransferase. The tr-type G domain maps to lysine 22–leucine 241. Residues glycine 31–serine 38 form a G1 region. Glycine 31–serine 38 contributes to the GTP binding site. Residues glycine 89 to aspartate 93 are G2. The interval aspartate 110 to glycine 113 is G3. GTP is bound by residues aspartate 110–histidine 114 and asparagine 165–aspartate 168. The segment at asparagine 165–aspartate 168 is G4. The segment at serine 204 to leucine 206 is G5. The interval glutamine 464 to isoleucine 633 is adenylyl-sulfate kinase. Glycine 472–serine 479 contacts ATP.

It in the C-terminal section; belongs to the APS kinase family. This sequence in the N-terminal section; belongs to the TRAFAC class translation factor GTPase superfamily. Classic translation factor GTPase family. CysN/NodQ subfamily. As to quaternary structure, heterodimer composed of CysD, the smaller subunit, and CysNC.

The catalysed reaction is sulfate + ATP + H(+) = adenosine 5'-phosphosulfate + diphosphate. It catalyses the reaction adenosine 5'-phosphosulfate + ATP = 3'-phosphoadenylyl sulfate + ADP + H(+). It participates in sulfur metabolism; hydrogen sulfide biosynthesis; sulfite from sulfate: step 1/3. The protein operates within sulfur metabolism; hydrogen sulfide biosynthesis; sulfite from sulfate: step 2/3. With CysD forms the ATP sulfurylase (ATPS) that catalyzes the adenylation of sulfate producing adenosine 5'-phosphosulfate (APS) and diphosphate, the first enzymatic step in sulfur assimilation pathway. APS synthesis involves the formation of a high-energy phosphoric-sulfuric acid anhydride bond driven by GTP hydrolysis by CysN coupled to ATP hydrolysis by CysD. Functionally, APS kinase catalyzes the synthesis of activated sulfate. The sequence is that of Bifunctional enzyme CysN/CysC (cysNC) from Pseudomonas aeruginosa (strain ATCC 15692 / DSM 22644 / CIP 104116 / JCM 14847 / LMG 12228 / 1C / PRS 101 / PAO1).